The primary structure comprises 329 residues: Glycerol-3-phosphate dehydrogenase [NAD(P)+] (329 aa).

The NADPH site is built by Trp15, His35, and Lys107. Residues Lys107, Gly135, and Ser137 each contribute to the sn-glycerol 3-phosphate site. NADPH is bound at residue Ala139. Sn-glycerol 3-phosphate is bound by residues Lys190, Asp243, Ser253, Arg254, and Asn255. Lys190 acts as the Proton acceptor in catalysis. An NADPH-binding site is contributed by Arg254. The NADPH site is built by Leu276 and Glu278.

This sequence belongs to the NAD-dependent glycerol-3-phosphate dehydrogenase family.

It is found in the cytoplasm. The catalysed reaction is sn-glycerol 3-phosphate + NAD(+) = dihydroxyacetone phosphate + NADH + H(+). It catalyses the reaction sn-glycerol 3-phosphate + NADP(+) = dihydroxyacetone phosphate + NADPH + H(+). It participates in membrane lipid metabolism; glycerophospholipid metabolism. In terms of biological role, catalyzes the reduction of the glycolytic intermediate dihydroxyacetone phosphate (DHAP) to sn-glycerol 3-phosphate (G3P), the key precursor for phospholipid synthesis. The sequence is that of Glycerol-3-phosphate dehydrogenase [NAD(P)+] from Rhodopseudomonas palustris (strain TIE-1).